A 251-amino-acid chain; its full sequence is MRMDKSEKRSNLADNFLYMLEFMVDDLLITRPNLCAPEEYPTCTEITFRSVFLNIRDRENGSCVNPCSPKCGKCTLFTLESPITDEDVMHIHVYKKRTESCKFLLGLTELPMKPIFDRVKKEFYSQNINWESNVESHLSRMPKLRGPCKKANDCVCYERNRERREQWCPTSELTKRMLPLFNLCKMQTGNIVLILRLVCNGPSVVSSFPVQRPVCKDPCNCCCPCPPTWPAPCSSPFDPCDPCKTVPAKKT.

Interacts with srp (via GATA-type Zn-finger domain); this interaction enhances srp binding to the promoter of crq/croquemort.

It localises to the nucleus. Transcriptional cofactor involved in efferocytosis. Together with srp mediates expression of the phagocytic receptor crq/croquemort in response to apoptotic cells, and is up-regulated by crq/croquemort in a positive feedback mechanism. Involved in macrophage engulfment and clearance of apoptotic cells during embryogenesis. This is Transcriptional cofactor Bfc from Drosophila melanogaster (Fruit fly).